The following is a 189-amino-acid chain: Interferon alpha-13 (189 aa).

Residues 1 to 23 (MARPCAFLMVLVVLSYWSACSLG) form the signal peptide. 2 disulfides stabilise this stretch: Cys24-Cys122 and Cys52-Cys162. N-linked (GlcNAc...) asparagine glycosylation is found at Asn94 and Asn101.

Belongs to the alpha/beta interferon family.

It localises to the secreted. Functionally, exhibits antiviral activity against Theiler's virus, Mengo virus and vesicular stomatitis virus. Interferons alpha stimulate the production of two enzymes: a protein kinase and an oligoadenylate synthetase. The polypeptide is Interferon alpha-13 (Ifna13) (Mus musculus (Mouse)).